Here is a 721-residue protein sequence, read N- to C-terminus: Exo beta-1,2-glucooligosaccharide sophorohydrolase (non-reducing end) (721 aa).

Positions 1-18 are cleaved as a signal peptide; sequence MKHIALLTTLLLSASLQA. One can recognise a Glycoamylase-like domain in the interval 474–708; the sequence is NHKLIGWNET…LLWNLFMSHP (235 aa).

In terms of assembly, monomer.

Its subcellular location is the periplasm. The enzyme catalyses [(1-&gt;2)-beta-D-glucosyl](n) + H2O = [(1-&gt;2)-beta-D-glucosyl](n-2) + sophorose. Catalyzes the hydrolysis of linear beta-1,2-glucan and beta-1,2-glucooligosaccharides with degrees of polymerization (DPs) greater than or equal to 4, to produce sophorose. The best substrates are tetra- and pentasaccharides. Acts as an exo-type enzyme that releases sophorose from the non-reducing end of the substrate. It cannot hydrolyze cyclic beta-1,2-glucans. The chain is Exo beta-1,2-glucooligosaccharide sophorohydrolase (non-reducing end) from Parabacteroides distasonis (strain ATCC 8503 / DSM 20701 / CIP 104284 / JCM 5825 / NCTC 11152).